Here is a 407-residue protein sequence, read N- to C-terminus: uncharacterized protein (407 aa).

12 helical membrane-spanning segments follow: residues 22-42 (IVSV…PLAV), 51-71 (LGFS…ATLA), 101-121 (ALLL…GLLV), 126-146 (VLGI…IGRV), 154-174 (VISW…PVGV), 179-199 (ALIP…GYYL), 227-247 (GLGL…ITLY), 258-278 (LSLT…ANTI), 286-306 (VAIV…LAPV), 309-329 (VALV…PALG), 347-367 (AYSV…GYVA), and 369-389 (AFGY…GVAL).

Belongs to the major facilitator superfamily. YhhS family.

The protein localises to the cell inner membrane. This is an uncharacterized protein from Burkholderia mallei (strain NCTC 10229).